A 266-amino-acid chain; its full sequence is RNA-binding protein 7 (266 aa).

An N-acetylglycine modification is found at glycine 2. The RRM domain maps to 10–87 (RTLFVGNLET…RPIKIQFRSG (78 aa)). ZCCHC8 binding regions lie at residues 25–35 (LLFELFHQAGP) and 59–76 (HEVS…IKLY). Residues 90 to 115 (HAPQDVSLSYPQHHVGNSSPTSTSPS) are compositionally biased toward polar residues. Positions 90-118 (HAPQDVSLSYPQHHVGNSSPTSTSPSRYE) are disordered. 2 positions are modified to phosphoserine: serine 136 and serine 137. Position 152 is an omega-N-methylarginine (arginine 152). The disordered stretch occupies residues 162-266 (SSPLDQSGFS…RDGKWRSSRH (105 aa)). Over residues 173-188 (SVQSHSHSFNQSSSSQ) the composition is skewed to low complexity. Serine 204 is modified (phosphoserine). Positions 209-266 (ADRHYSREQRYTDHGSDHHYRGKRDDFFYEDRNHDDWSHDYDNRRDSSRDGKWRSSRH) are enriched in basic and acidic residues.

As to quaternary structure, component of the nuclear exosome targeting (NEXT) complex composed of MTREX, ZCCHC8, and RBM7 that directs a subset of non-coding short-lived RNAs for exosomal degradation. Interacts with ZCCHC8 and SF3B2/SAP145. Binds to MTREX through ZCCHC8. Interacts with YWHAE and YWHAZ; these interactions are stress-dependent and RBM7 phosphorylation dependent; release RNA from the NEXT complex and may affect RNA targeting to the nuclear RNA exosomome for degradation. Interacts with MEPCE and LARP7, the core subunits of 7SK snRNP; upon genotoxic stress this interaction is enhanced, triggering the release of inactive P-TEFb complex from the core and P-TEFb complex activation. In terms of processing, phosphorylated at Ser-136 by MAPK14/p38-alpha-activated MAPKAPK2/MK2; this phosphorylation is stress-dependent; this phosphorylation decreases its RNA-binding capacity therefore affecting RNA nuclear exosome-mediated degradation. This phosphorylation mediates YWHAE and YWHAZ interactions. Ubiquitous.

It is found in the nucleus. The protein localises to the nucleoplasm. RNA-binding subunit of the trimeric nuclear exosome targeting (NEXT) complex, a complex that functions as an RNA exosome cofactor that directs a subset of non-coding short-lived RNAs for exosomal degradation. NEXT is involved in surveillance and turnover of aberrant transcripts and non-coding RNAs. Binds preferentially polyuridine sequences and associates with newly synthesized RNAs, including pre-mRNAs and short-lived exosome substrates such as promoter upstream transcripts (PROMPTs), enhancer RNAs (eRNAs), and 3'-extended products from small nuclear RNAs (snRNAs). Participates in several biological processes including DNA damage response (DDR) and stress response. During stress response, activation of the p38MAPK-MK2 pathway decreases RBM7-RNA-binding and subsequently the RNA exosome degradation activities, thereby modulating the turnover of non-coding transcriptome. Participates in DNA damage response (DDR), through its interaction with MEPCE and LARP7, the core subunits of 7SK snRNP complex, that release the positive transcription elongation factor b (P-TEFb) complex from the 7SK snRNP. In turn, activation of P-TEFb complex induces the transcription of P-TEFb-dependent DDR genes to promote cell viability. This is RNA-binding protein 7 from Homo sapiens (Human).